Reading from the N-terminus, the 230-residue chain is Urease accessory protein UreE (230 aa).

The interval 197 to 230 is disordered; that stretch reads LHIHAIHSHGDGDSHNHDHDHSHSHGDHDHDHKH. Positions 204–230 are enriched in basic and acidic residues; sequence SHGDGDSHNHDHDHSHSHGDHDHDHKH.

The protein belongs to the UreE family.

The protein resides in the cytoplasm. In terms of biological role, involved in urease metallocenter assembly. Binds nickel. Probably functions as a nickel donor during metallocenter assembly. This Yersinia aldovae protein is Urease accessory protein UreE.